The chain runs to 249 residues: Probable transglycosylase SceD 2 (249 aa).

A signal peptide spans 1–27 (MKKTVIASTLAVGLGVTGIAAGNSADA). Low complexity-rich tracts occupy residues 80–95 (WSYGEGSGEGSNASSE) and 103–171 (QQTA…SSSS). The disordered stretch occupies residues 80-203 (WSYGEGSGEG…PSSGASGKFQ (124 aa)). Polar residues-rich tracts occupy residues 172 to 182 (GVNAHLQQIAQ) and 192 to 203 (TNPSSGASGKFQ).

The protein belongs to the transglycosylase family. SceD subfamily.

Its subcellular location is the secreted. Its function is as follows. Is able to cleave peptidoglycan and affects clumping and separation of bacterial cells. This Staphylococcus saprophyticus subsp. saprophyticus (strain ATCC 15305 / DSM 20229 / NCIMB 8711 / NCTC 7292 / S-41) protein is Probable transglycosylase SceD 2 (sceD2).